The chain runs to 902 residues: HTH-type transcriptional regulator MalT (902 aa).

39–46 contacts ATP; the sequence is SPAGYGKT. Residues 830 to 895 enclose the HTH luxR-type domain; sequence ELIRTSPLTQ…DAVQHAQQLL (66 aa). A DNA-binding region (H-T-H motif) is located at residues 854 to 873; that stretch reads NEQIAGELAVAATTIKTHIR.

Belongs to the MalT family. In terms of assembly, monomer in solution. Oligomerizes to an active state in the presence of the positive effectors ATP and maltotriose.

Activated by ATP and maltotriose, which are both required for DNA binding. Positively regulates the transcription of the maltose regulon whose gene products are responsible for uptake and catabolism of malto-oligosaccharides. Specifically binds to the promoter region of its target genes, recognizing a short DNA motif called the MalT box. This is HTH-type transcriptional regulator MalT from Salmonella dublin (strain CT_02021853).